The following is a 174-amino-acid chain: Adenine phosphoribosyltransferase (174 aa).

The protein belongs to the purine/pyrimidine phosphoribosyltransferase family. In terms of assembly, homodimer.

It localises to the cytoplasm. The enzyme catalyses AMP + diphosphate = 5-phospho-alpha-D-ribose 1-diphosphate + adenine. It functions in the pathway purine metabolism; AMP biosynthesis via salvage pathway; AMP from adenine: step 1/1. Its function is as follows. Catalyzes a salvage reaction resulting in the formation of AMP, that is energically less costly than de novo synthesis. In Mycolicibacterium vanbaalenii (strain DSM 7251 / JCM 13017 / BCRC 16820 / KCTC 9966 / NRRL B-24157 / PYR-1) (Mycobacterium vanbaalenii), this protein is Adenine phosphoribosyltransferase.